A 401-amino-acid polypeptide reads, in one-letter code: Beta-ketoadipyl-CoA thiolase (401 aa).

Catalysis depends on Cys-90, which acts as the Acyl-thioester intermediate. Active-site proton acceptor residues include His-357 and Cys-387.

It belongs to the thiolase-like superfamily. Thiolase family.

It carries out the reaction succinyl-CoA + acetyl-CoA = 3-oxoadipyl-CoA + CoA. It functions in the pathway aromatic compound metabolism; beta-ketoadipate pathway; acetyl-CoA and succinyl-CoA from 3-oxoadipate: step 2/2. Functionally, catalyzes thiolytic cleavage of beta-ketoadipyl-CoA to succinyl-CoA and acetyl-CoA. This chain is Beta-ketoadipyl-CoA thiolase (pcaF), found in Acinetobacter baylyi (strain ATCC 33305 / BD413 / ADP1).